The primary structure comprises 360 residues: Nucleoporin SEH1 (360 aa).

6 WD repeats span residues 10-49, 55-96, 111-152, 160-210, 217-258, and 276-315; these read DHKD…DWHC, THSG…SNDK, DSRT…NLSQ, SCKL…RKYA, TVTD…KELT, and NHNS…NWKC. Lysine 12 participates in a covalent cross-link: Glycyl lysine isopeptide (Lys-Gly) (interchain with G-Cter in SUMO2). Serine 179 and serine 190 each carry phosphoserine. Residues 324–354 are compositionally biased toward polar residues; it reads SPVNGSSQQGTSNPSLGSTIPSLQNSLNGSS. A disordered region spans residues 324 to 360; it reads SPVNGSSQQGTSNPSLGSTIPSLQNSLNGSSAGRKHS.

It belongs to the WD repeat SEC13 family. As to quaternary structure, component of the Nup107-160 subcomplex of the nuclear pore complex (NPC). The Nup107-160 subcomplex includes NUP160, NUP133, NUP107, NUP98, NUP85, NUP43, NUP37, SEH1 and SEC13. The SEH1 subunit appears to be only weakly associated with the Nup107-160 subcomplex. Component of the GATOR2 subcomplex, composed of MIOS, SEC13, SEH1L, WDR24 and WDR59. The GATOR2 complex interacts with CASTOR1 and CASTOR2; the interaction is negatively regulated by arginine. The GATOR2 complex interacts with SESN1, SESN2 and SESN3; the interaction is negatively regulated by amino acids. SESN1, SESN2 and SESN3 convey leucine availability via direct interaction with SEH1L and WDR24.

It localises to the chromosome. It is found in the centromere. Its subcellular location is the kinetochore. The protein localises to the nucleus. The protein resides in the nuclear pore complex. It localises to the lysosome membrane. Its activity is regulated as follows. The GATOR2 complex is negatively regulated by the upstream amino acid sensors CASTOR1 and SESN2, which sequester the GATOR2 complex in absence of amino acids. In the presence of abundant amino acids, GATOR2 is released from CASTOR1 and SESN2 and activated. Its function is as follows. Component of the Nup107-160 subcomplex of the nuclear pore complex (NPC). The Nup107-160 subcomplex is required for the assembly of a functional NPC. The Nup107-160 subcomplex is also required for normal kinetochore microtubule attachment, mitotic progression and chromosome segregation. This subunit plays a role in recruitment of the Nup107-160 subcomplex to the kinetochore. As a component of the GATOR2 complex, functions as an activator of the amino acid-sensing branch of the mTORC1 signaling pathway. The GATOR2 complex indirectly activates mTORC1 through the inhibition of the GATOR1 subcomplex. GATOR2 probably acts as an E3 ubiquitin-protein ligase toward GATOR1. In the presence of abundant amino acids, the GATOR2 complex mediates ubiquitination of the NPRL2 core component of the GATOR1 complex, leading to GATOR1 inactivation. In the absence of amino acids, GATOR2 is inhibited, activating the GATOR1 complex. Within the GATOR2 complex, SEC13 and SEH1L are required to stabilize the complex. In Homo sapiens (Human), this protein is Nucleoporin SEH1 (SEH1L).